We begin with the raw amino-acid sequence, 618 residues long: Protease 4 (618 aa).

The Cytoplasmic segment spans residues M1 to E24. Residues M25 to I45 form a helical membrane-spanning segment. The Periplasmic portion of the chain corresponds to G46–R618. The active-site Proton donor/acceptor is the K209. S409 serves as the catalytic Nucleophile.

This sequence belongs to the peptidase S49 family. Homotetramer.

The protein localises to the cell inner membrane. Its function is as follows. Digests cleaved signal peptides in vitro, its in vivo function is unknown. This activity is necessary to maintain proper secretion of mature proteins across the membrane. The protein is Protease 4 (sppA) of Salmonella typhi.